Reading from the N-terminus, the 625-residue chain is DNA-directed RNA polymerase subunit gamma (625 aa).

Zn(2+) is bound by residues Cys-71, Cys-73, Cys-86, and Cys-89. Positions 467, 469, and 471 each coordinate Mg(2+).

Belongs to the RNA polymerase beta' chain family. RpoC1 subfamily. As to quaternary structure, in cyanobacteria the RNAP catalytic core is composed of 2 alpha, 1 beta, 1 beta', 1 gamma and 1 omega subunit. When a sigma factor is associated with the core the holoenzyme is formed, which can initiate transcription. Requires Mg(2+) as cofactor. Zn(2+) is required as a cofactor.

The enzyme catalyses RNA(n) + a ribonucleoside 5'-triphosphate = RNA(n+1) + diphosphate. DNA-dependent RNA polymerase catalyzes the transcription of DNA into RNA using the four ribonucleoside triphosphates as substrates. This chain is DNA-directed RNA polymerase subunit gamma, found in Trichormus variabilis (strain ATCC 29413 / PCC 7937) (Anabaena variabilis).